Here is a 254-residue protein sequence, read N- to C-terminus: Thiazole synthase (254 aa).

Residue Lys-95 is the Schiff-base intermediate with DXP of the active site. 1-deoxy-D-xylulose 5-phosphate is bound by residues Gly-156, 182 to 183 (AG), and 204 to 205 (NT).

The protein belongs to the ThiG family. In terms of assembly, homotetramer. Forms heterodimers with either ThiH or ThiS.

The protein resides in the cytoplasm. The catalysed reaction is [ThiS sulfur-carrier protein]-C-terminal-Gly-aminoethanethioate + 2-iminoacetate + 1-deoxy-D-xylulose 5-phosphate = [ThiS sulfur-carrier protein]-C-terminal Gly-Gly + 2-[(2R,5Z)-2-carboxy-4-methylthiazol-5(2H)-ylidene]ethyl phosphate + 2 H2O + H(+). It functions in the pathway cofactor biosynthesis; thiamine diphosphate biosynthesis. Its function is as follows. Catalyzes the rearrangement of 1-deoxy-D-xylulose 5-phosphate (DXP) to produce the thiazole phosphate moiety of thiamine. Sulfur is provided by the thiocarboxylate moiety of the carrier protein ThiS. In vitro, sulfur can be provided by H(2)S. This is Thiazole synthase from Shewanella sp. (strain MR-7).